An 89-amino-acid polypeptide reads, in one-letter code: Small ribosomal subunit protein uS15 (89 aa).

Belongs to the universal ribosomal protein uS15 family. Part of the 30S ribosomal subunit. Forms a bridge to the 50S subunit in the 70S ribosome, contacting the 23S rRNA.

Its function is as follows. One of the primary rRNA binding proteins, it binds directly to 16S rRNA where it helps nucleate assembly of the platform of the 30S subunit by binding and bridging several RNA helices of the 16S rRNA. Functionally, forms an intersubunit bridge (bridge B4) with the 23S rRNA of the 50S subunit in the ribosome. This Desulforudis audaxviator (strain MP104C) protein is Small ribosomal subunit protein uS15.